A 30-amino-acid chain; its full sequence is Kalata-B14 (30 aa).

A cross-link (cyclopeptide (Gly-Asp)) is located at residues 1–30; it reads GLPVCGESCFGGTCNTPGCACDPWPVCTRD. Disulfide bonds link cysteine 5–cysteine 19, cysteine 9–cysteine 21, and cysteine 14–cysteine 27.

In terms of processing, this is a cyclic peptide.

Functionally, probably participates in a plant defense mechanism. The polypeptide is Kalata-B14 (Oldenlandia affinis).